The chain runs to 372 residues: Alpha-1-antitrypsin homolog (372 aa).

The first 19 residues, 1-19 (MPATCLLHTMLTLPSPSTR), serve as a signal peptide directing secretion. N-linked (GlcNAc...) asparagine glycosylation is found at Asn214 and Asn226. Residues 328-347 (AATTIEIMPMSLPDTVILNR) form an RCL region.

This sequence belongs to the serpin family.

Its subcellular location is the secreted. This chain is Alpha-1-antitrypsin homolog, found in Cyprinus carpio (Common carp).